The primary structure comprises 152 residues: 2-C-methyl-D-erythritol 2,4-cyclodiphosphate synthase (152 aa).

A divalent metal cation contacts are provided by D8 and H10. 4-CDP-2-C-methyl-D-erythritol 2-phosphate contacts are provided by residues 8 to 10 and 34 to 35; these read DSH and HS. H42 is an a divalent metal cation binding site. 4-CDP-2-C-methyl-D-erythritol 2-phosphate contacts are provided by residues 56–58, 61–65, 100–106, and 131–135; these read DIG, FPDTD, LDRPKLG, and FKTSE.

It belongs to the IspF family. As to quaternary structure, homotrimer. The cofactor is a divalent metal cation.

The enzyme catalyses 4-CDP-2-C-methyl-D-erythritol 2-phosphate = 2-C-methyl-D-erythritol 2,4-cyclic diphosphate + CMP. Its pathway is isoprenoid biosynthesis; isopentenyl diphosphate biosynthesis via DXP pathway; isopentenyl diphosphate from 1-deoxy-D-xylulose 5-phosphate: step 4/6. In terms of biological role, involved in the biosynthesis of isopentenyl diphosphate (IPP) and dimethylallyl diphosphate (DMAPP), two major building blocks of isoprenoid compounds. Catalyzes the conversion of 4-diphosphocytidyl-2-C-methyl-D-erythritol 2-phosphate (CDP-ME2P) to 2-C-methyl-D-erythritol 2,4-cyclodiphosphate (ME-CPP) with a corresponding release of cytidine 5-monophosphate (CMP). This chain is 2-C-methyl-D-erythritol 2,4-cyclodiphosphate synthase, found in Thermus thermophilus (strain ATCC 27634 / DSM 579 / HB8).